We begin with the raw amino-acid sequence, 63 residues long: Large ribosomal subunit protein uL29 (63 aa).

It belongs to the universal ribosomal protein uL29 family.

The polypeptide is Large ribosomal subunit protein uL29 (Neisseria meningitidis serogroup C (strain 053442)).